The primary structure comprises 176 residues: Peptidoglycan-associated lipoprotein (176 aa).

The N-terminal stretch at 1–32 (MSRIDTPAASRMQTIARNPVMIALVMTLALAG) is a signal peptide. The N-palmitoyl cysteine moiety is linked to residue Cys-33. Cys-33 is lipidated: S-diacylglycerol cysteine. In terms of domain architecture, OmpA-like spans 58 to 175 (QQDFTVNVGD…RAVTVLGGAG (118 aa)).

It belongs to the Pal lipoprotein family. As to quaternary structure, the Tol-Pal system is composed of five core proteins: the inner membrane proteins TolA, TolQ and TolR, the periplasmic protein TolB and the outer membrane protein Pal. They form a network linking the inner and outer membranes and the peptidoglycan layer.

It is found in the cell outer membrane. Its function is as follows. Part of the Tol-Pal system, which plays a role in outer membrane invagination during cell division and is important for maintaining outer membrane integrity. In Rhizobium meliloti (strain 1021) (Ensifer meliloti), this protein is Peptidoglycan-associated lipoprotein.